We begin with the raw amino-acid sequence, 89 residues long: Small ribosomal subunit protein uS15 (89 aa).

Basic and acidic residues predominate over residues 1-21 (MAISQERKNEIIKEYARHEGD). The disordered stretch occupies residues 1–24 (MAISQERKNEIIKEYARHEGDTGS).

Belongs to the universal ribosomal protein uS15 family. Part of the 30S ribosomal subunit. Forms a bridge to the 50S subunit in the 70S ribosome, contacting the 23S rRNA.

Its function is as follows. One of the primary rRNA binding proteins, it binds directly to 16S rRNA where it helps nucleate assembly of the platform of the 30S subunit by binding and bridging several RNA helices of the 16S rRNA. In terms of biological role, forms an intersubunit bridge (bridge B4) with the 23S rRNA of the 50S subunit in the ribosome. This Enterococcus faecalis (strain ATCC 700802 / V583) protein is Small ribosomal subunit protein uS15.